The following is a 442-amino-acid chain: MSKIYVLDTNVLLQDPNAIFSFEENEVVIPAVVLEEVDSKKRYMDEVGRNARHVSKLIDALRQKGRLHEHVPLDTGGTLRIELNHRSFHQLQEIFIEKTNDNRILAVAKNLSLEEETKENGRPVILVSKDVLVRVKADAIGLLAEDFLNDRVVDNDEMYSGYKDLYISQQLFSSFYGKNQISVNDVKQHAFYPNQFALMKDELGGSSSAVGIADKTGTVLKRLVFDDEHIWGIRPKNVQQTMALELLLREDIPLVTLIGKAGTGKTLLALAAGLLQTEDLGIYKKLVVARPIVPVGKDIGYLPGEKEEKLKPWMQPIFDNLEFLFNAKKPGELDAILAGIGSIQVEALTYIRGRSIPDQFIIIDEAQNLTRHEVKTLLTRVGEGSKIVLMGDPEQIDHPYLDSLNNGLAYVVERFKGQPISGSVKLLKGERSGLAQLAADLL.

Residues 3–135 (KIYVLDTNVL…LVSKDVLVRV (133 aa)) enclose the PINc domain. Residue 259–266 (GKAGTGKT) coordinates ATP.

This sequence in the N-terminal section; belongs to the PINc/VapC protein family. It in the C-terminal section; belongs to the PhoH family.

The enzyme catalyses n ATP + n H2O + wound RNA = n ADP + n phosphate + unwound RNA.. It catalyses the reaction ATP + H2O = ADP + phosphate + H(+). The catalysed reaction is GTP + H2O = GDP + phosphate + H(+). Its function is as follows. Unwinds and/or cleaves 5'-tailed RNA in vitro. Has ATPase and GTPase activities. Unlike the protein in mycobacteria there does not seem to be an antitoxin gene upstream, suggesting this is not a toxin-antitoxin system. This chain is Protein PhoH2, found in Bacillus subtilis (strain 168).